Consider the following 348-residue polypeptide: LRP2-binding protein (348 aa).

Residues 60 to 93 form a TPR repeat; it reads TLAYFLRGQLYFEEGWYEEALEQFEEIEEKDHQA. 6 Sel1-like repeats span residues 94-126, 134-169, 174-207, 208-243, 244-278, and 298-333; these read TYQL…DSPC, FAAA…DNGN, VKAQ…GNGN, LESQ…ERGN, VYAQ…EVHD, and AMAS…RLNP.

In terms of assembly, interacts with LRP2.

Its subcellular location is the cytoplasm. Its function is as follows. May act as an adapter that regulates LRP2 function. The polypeptide is LRP2-binding protein (LRP2BP) (Macaca fascicularis (Crab-eating macaque)).